The sequence spans 64 residues: DNA gyrase inhibitor YacG (64 aa).

Positions 9, 12, 28, and 32 each coordinate Zn(2+). Residues 45–64 (KRIPSAGDLSDSDDWSEQQP) form a disordered region. A compositionally biased stretch (acidic residues) spans 54 to 64 (SDSDDWSEQQP).

It belongs to the DNA gyrase inhibitor YacG family. As to quaternary structure, interacts with GyrB. The cofactor is Zn(2+).

Its function is as follows. Inhibits all the catalytic activities of DNA gyrase by preventing its interaction with DNA. Acts by binding directly to the C-terminal domain of GyrB, which probably disrupts DNA binding by the gyrase. This Klebsiella pneumoniae subsp. pneumoniae (strain ATCC 700721 / MGH 78578) protein is DNA gyrase inhibitor YacG.